We begin with the raw amino-acid sequence, 381 residues long: MNYNNFENSKGDGHSRLPKPTYSGTLSDGYDESKIKRQKTDSAFNAAYSPHMYPNSPYYEGSWNTGYTPQLHHVAPHNQYFHPIQPSTQYNYTSPPNYTENYIPPVHQNISYAPALNLQKWPSSYCENTQALKNDKDYQTSISYEDVAIPTVKEIQLIEKNRGKDTFMNEISPVPSSKDQASAEPTEIPRKDPELANSNAEDDHNNLGLEDDDRDEQLESEGLGKVVLVPGTSIALITDEDVKKWREERKKMWLLKISNNKQKHMQEMGIKEDELKSQPSIFKESRKEKQFIQSIQNQVQRGNPKIDLNLKLIQREFANENSQLLDFIRELGDVGLLEYELSQQEKDVLFGSSEDNNKNHYKPNYKNRKPNLSRANFTRNK.

Met1 is subject to N-acetylmethionine. Disordered regions lie at residues Met1–Gln38, Lys164–Glu216, and Phe350–Lys381. Ser172 is subject to Phosphoserine. Basic residues predominate over residues Asn359 to Asn371.

It localises to the nucleus. Functionally, involved in a late nucleoplasmic step of 60S ribosomal subunit assembly. The chain is Ribosome assembly 1 protein (RSA1) from Saccharomyces cerevisiae (strain ATCC 204508 / S288c) (Baker's yeast).